Here is a 21-residue protein sequence, read N- to C-terminus: Fibrinogen beta chain (21 aa).

Gln-1 is subject to Pyrrolidone carboxylic acid. The segment covering 1-11 (QPSYDYDEEED) has biased composition (acidic residues). The interval 1–21 (QPSYDYDEEEDDRAKLRLDAR) is disordered. Residue Tyr-6 is modified to Sulfotyrosine. The span at 12–21 (DRAKLRLDAR) shows a compositional bias: basic and acidic residues.

In terms of assembly, heterohexamer; disulfide linked. Contains 2 sets of 3 non-identical chains (alpha, beta and gamma). The 2 heterotrimers are in head to head conformation with the N-termini in a small central domain. Conversion of fibrinogen to fibrin is triggered by thrombin, which cleaves fibrinopeptides A and B from alpha and beta chains, and thus exposes the N-terminal polymerization sites responsible for the formation of the soft clot.

The protein localises to the secreted. In terms of biological role, cleaved by the protease thrombin to yield monomers which, together with fibrinogen alpha (FGA) and fibrinogen gamma (FGG), polymerize to form an insoluble fibrin matrix. Fibrin has a major function in hemostasis as one of the primary components of blood clots. In addition, functions during the early stages of wound repair to stabilize the lesion and guide cell migration during re-epithelialization. Was originally thought to be essential for platelet aggregation, based on in vitro studies using anticoagulated blood. However subsequent studies have shown that it is not absolutely required for thrombus formation in vivo. Enhances expression of SELP in activated platelets. Maternal fibrinogen is essential for successful pregnancy. Fibrin deposition is also associated with infection, where it protects against IFNG-mediated hemorrhage. May also facilitate the antibacterial immune response via both innate and T-cell mediated pathways. The sequence is that of Fibrinogen beta chain (FGB) from Antilocapra americana (Pronghorn).